The chain runs to 217 residues: Peptide methionine sulfoxide reductase MsrA (217 aa).

Residue Cys-56 is part of the active site.

Belongs to the MsrA Met sulfoxide reductase family.

The enzyme catalyses L-methionyl-[protein] + [thioredoxin]-disulfide + H2O = L-methionyl-(S)-S-oxide-[protein] + [thioredoxin]-dithiol. It carries out the reaction [thioredoxin]-disulfide + L-methionine + H2O = L-methionine (S)-S-oxide + [thioredoxin]-dithiol. In terms of biological role, has an important function as a repair enzyme for proteins that have been inactivated by oxidation. Catalyzes the reversible oxidation-reduction of methionine sulfoxide in proteins to methionine. This Corynebacterium melassecola protein is Peptide methionine sulfoxide reductase MsrA.